A 642-amino-acid chain; its full sequence is Voltage-gated potassium channel KCNC2 (642 aa).

At 1 to 233 (MGKIESNERV…EDPYSSRAAR (233 aa)) the chain is on the cytoplasmic side. A disordered region spans residues 45–98 (DCLTAAGDKLQPLPPPLSPPPRPPPLSPVPSGCFEGGAGNCSSHGGNGGNGGSD). Over residues 56–72 (PLPPPLSPPPRPPPLSP) the composition is skewed to pro residues. Residues 78–98 (FEGGAGNCSSHGGNGGNGGSD) are compositionally biased toward gly residues. The Zn(2+) site is built by His128, Cys134, Cys155, and Cys156. Residues 234–254 (FIAFASLFFILVSITTFCLET) form a helical membrane-spanning segment. Residues Asn263 and Asn270 are each glycosylated (N-linked (GlcNAc...) asparagine). Residues 287 to 307 (TYVEGVCVVWFTFEFLVRIVF) form a helical membrane-spanning segment. Residues 308-317 (SPNKLEFIKN) are Cytoplasmic-facing. A helical membrane pass occupies residues 318-338 (LLNIIDFVAILPFYLEVGLSG). Residues 350 to 372 (FLRVVRFVRILRIFKLTRHFVGL) form a helical; Voltage-sensor membrane-spanning segment. Over 373 to 385 (RVLGHTLRASTNE) the chain is Cytoplasmic. The chain crosses the membrane as a helical span at residues 386–406 (FLLLIIFLALGVLIFATMIYY). The K(+) site is built by Thr441, Leu442, Gly443, and Tyr444. The Selectivity filter signature appears at 441-446 (TLGYGD). A helical transmembrane segment spans residues 457 to 477 (VGALCALAGVLTIAMPVPVIV). The Cytoplasmic portion of the chain corresponds to 478–642 (NNFGMYYSLA…RSRSPIPSIL (165 aa)). Residues 542 to 576 (SVLSGDDSTGSEPPLSPPERLPIRRSSTRDKNRRG) are disordered. Ser604 is subject to Phosphoserine.

It belongs to the potassium channel family. C (Shaw) (TC 1.A.1.2) subfamily. Kv3.2/KCNC2 sub-subfamily. Homotetramer and heterotetramer with other channel-forming alpha subunits, such as KCNC1. Interacts with KCNC1. Homotetramer or heterotetramer channel activity is regulated by association with modulating ancillary subunits such as KCNE1, KCNE2 and KCNE3, creating a functionally diverse range of channel complexes. Interacts with KCNE1, KCNE2 and KCNE3. Post-translationally, phosphorylated by PKA in cortical synaptosomes. cAMP-dependent phosphorylation inhibits channel activity. Histamine H2 receptor- and PKA-induced phosphorylation extends action potential spike duration, reduces action potential spike amplitude, sustains maximum firing frequency in hippocampal interneurons; also reduces the incidence of high-frequency oscillations in hippocampal CA3 pyramidal cell layers. In terms of tissue distribution, weakly expressed in the brain at postnatal age day 7 (P7) and increased at P60. Not detectable in newborn hippocampus. Expressed weakly at P7 in the early developing hippocampus, increasing progressively and reaching a plateau of expression at P14 that is maintained throughout P51. Expressed in paravalbumin- and somatostain-containing inhibitory interneurons of the hippocampus; in the CA1/CA3 stratum oriens-alveus and stratum pyramidale and in cells within the hilus and subgranular layer of the dentate gyrus (DG). Strongly expressed in parvalbumin (PV)-containing fast-spiking GABAergic inhibitor interneurons in deep cortical layers V and VI. Also expressed in non-fast-spiking calbindin (CB)- and/or somatostatin (SOM)-containing interneurons in deep cortical layers V and VI. Expressed in starburst amacrine cells of the retina in the inner nuclear layer (INL) and ganglion cell layer (GCL). Expressed in the suprachiasmatic nucleus (SCN) (at protein level). Expressed in the early developing brain, increasing progressively until P14.

It is found in the cell membrane. It localises to the membrane. The protein localises to the perikaryon. The protein resides in the cell projection. Its subcellular location is the axon. It is found in the dendrite. It localises to the postsynaptic cell membrane. The protein localises to the presynaptic cell membrane. The protein resides in the synapse. Its subcellular location is the synaptosome. It is found in the apical cell membrane. It localises to the basolateral cell membrane. The enzyme catalyses K(+)(in) = K(+)(out). With respect to regulation, inhibited by millimolar levels of tetraethylammonium (TEA). Contrary to other channels, inhibited only by millimolar levels of 4-aminopyridine (4-AP). Inhibited by Stichodactyla helianthus peptide ShK. Its function is as follows. Voltage-gated potassium channel that mediates transmembrane potassium transport in excitable membranes, primarily in the brain. Contributes to the regulation of the fast action potential repolarization and in sustained high-frequency firing in neurons of the central nervous system. Homotetramer channels mediate delayed-rectifier voltage-dependent potassium currents that activate rapidly at high-threshold voltages and inactivate slowly. Forms tetrameric channels through which potassium ions pass in accordance with their electrochemical gradient. The channel alternates between opened and closed conformations in response to the voltage difference across the membrane. Can form functional homotetrameric and heterotetrameric channels that contain variable proportions of KCNC1, and possibly other family members as well; channel properties depend on the type of alpha subunits that are part of the channel. Channel properties may be modulated by either the association with ancillary subunits, such as KCNE1, KCNE2 and KCNE3 or indirectly by nitric oxide (NO) through a cGMP- and PKG-mediated signaling cascade, slowing channel activation and deactivation of delayed rectifier potassium channels. Contributes to fire sustained trains of very brief action potentials at high frequency in thalamocortical and suprachiasmatic nucleus (SCN) neurons, in hippocampal and neocortical interneurons and in retinal ganglion cells. Sustained maximal action potential firing frequency in inhibitory hippocampal interneurons is negatively modulated by histamine H2 receptor activation in a cAMP- and protein kinase (PKA) phosphorylation-dependent manner. Plays a role in maintaining the fidelity of synaptic transmission in neocortical GABAergic interneurons by generating action potential (AP) repolarization at nerve terminals, thus reducing spike-evoked calcium influx and GABA neurotransmitter release. Required for long-range synchronization of gamma oscillations over distance in the neocortex. Contributes to the modulation of the circadian rhythm of spontaneous action potential firing in suprachiasmatic nucleus (SCN) neurons in a light-dependent manner. The sequence is that of Voltage-gated potassium channel KCNC2 from Mus musculus (Mouse).